The following is a 963-amino-acid chain: Longitudinals lacking protein, isoforms J/P/Q/S/Z (963 aa).

The region spanning 32-97 (VDCTLAAEGK…MYRGEVNISQ (66 aa)) is the BTB domain. Disordered stretches follow at residues 115-200 (LSDN…SSVL), 228-340 (SSGP…ASAS), 447-469 (DAQQ…RIRV), and 482-520 (GKSS…VSTT). Low complexity-rich tracts occupy residues 162–175 (SGDV…SSSP), 228–251 (SSGP…LTST), 263–293 (TSST…QTTS), and 329–340 (NSATGPNPASAS). Residues 491–512 (KLTQSKKSLISDAKTTNKTSTP) are compositionally biased toward polar residues. A C2H2-type 1; degenerate zinc finger spans residues 849–871 (WVCRNCNRTYKWKNSLKCHLKNE). The C2H2-type 2; degenerate zinc-finger motif lies at 878–901 (YFCSKMCGYATNVHSNLKRHLNTK). A disordered region spans residues 900-963 (TKCRDREKDA…YTLVFQNDSA (64 aa)). A compositionally biased stretch (basic and acidic residues) spans 901 to 915 (KCRDREKDADDEKKP). Low complexity predominate over residues 937-953 (SSSNNNNNGGGSSTSST). The span at 954–963 (YTLVFQNDSA) shows a compositional bias: polar residues.

As to expression, by stage 11, isoform Q, isoform P and isoform Z are expressed throughout the mesoderm. From stage 15, expression of isoform P expands to all tissues, whereas expression of isoform Z and isoform Q becomes restricted during later stages; starting from stage 14 to 16, isoform Z is expressed in muscle, and isoform Q and isoform Z are expressed in the CNS. For some isoforms, expression is also seen in specific types of cells in the embryo; isoform Z is expressed in the ventral furrow at stage 5, and isoform Q is expressed around the tracheal pits at stage 11. Isoform Z also shows transient enrichment in a dorsal cell layer in the CNS at stages 13 and 14.

The protein resides in the nucleus. Functionally, putative transcription factor required for axon growth and guidance in the central and peripheral nervous systems. Repels CNS axons away from the midline by promoting the expression of the midline repellent sli and its receptor robo. This is Longitudinals lacking protein, isoforms J/P/Q/S/Z from Drosophila melanogaster (Fruit fly).